We begin with the raw amino-acid sequence, 570 residues long: Formate--tetrahydrofolate ligase (570 aa).

65-72 (TPFGEGKT) lines the ATP pocket.

It belongs to the formate--tetrahydrofolate ligase family.

The enzyme catalyses (6S)-5,6,7,8-tetrahydrofolate + formate + ATP = (6R)-10-formyltetrahydrofolate + ADP + phosphate. The protein operates within one-carbon metabolism; tetrahydrofolate interconversion. The protein is Formate--tetrahydrofolate ligase of Shewanella sediminis (strain HAW-EB3).